The following is a 205-amino-acid chain: Pyrrolidone-carboxylate peptidase (205 aa).

Catalysis depends on residues E79, C142, and H165.

This sequence belongs to the peptidase C15 family. As to quaternary structure, homotetramer.

The protein localises to the cytoplasm. The enzyme catalyses Release of an N-terminal pyroglutamyl group from a polypeptide, the second amino acid generally not being Pro.. Its function is as follows. Removes 5-oxoproline from various penultimate amino acid residues except L-proline. This is Pyrrolidone-carboxylate peptidase from Gloeobacter violaceus (strain ATCC 29082 / PCC 7421).